The sequence spans 235 residues: Elongation factor Tu, chloroplastic (235 aa).

Positions 1–125 (KNMITGAAQM…KVDSYIPTPQ (125 aa)) constitute a tr-type G domain. 47–50 (NKED) lines the GTP pocket.

Belongs to the TRAFAC class translation factor GTPase superfamily. Classic translation factor GTPase family. EF-Tu/EF-1A subfamily.

It localises to the plastid. It is found in the chloroplast. It carries out the reaction GTP + H2O = GDP + phosphate + H(+). In terms of biological role, GTP hydrolase that promotes the GTP-dependent binding of aminoacyl-tRNA to the A-site of ribosomes during protein biosynthesis. The chain is Elongation factor Tu, chloroplastic (tufA) from Gonium pectorale (Green alga).